Reading from the N-terminus, the 157-residue chain is Small ribosomal subunit protein uS7 (157 aa).

Belongs to the universal ribosomal protein uS7 family. As to quaternary structure, part of the 30S ribosomal subunit. Contacts proteins S9 and S11.

In terms of biological role, one of the primary rRNA binding proteins, it binds directly to 16S rRNA where it nucleates assembly of the head domain of the 30S subunit. Is located at the subunit interface close to the decoding center, probably blocks exit of the E-site tRNA. The sequence is that of Small ribosomal subunit protein uS7 from Borrelia turicatae (strain 91E135).